The sequence spans 201 residues: Small ribosomal subunit protein uS4c (201 aa).

A disordered region spans residues 17–36; that stretch reads ALPGLTRKTPKSGSNLKKKF. Positions 89 to 157 constitute an S4 RNA-binding domain; the sequence is MRLDNILFRL…VQNYIASSDP (69 aa).

The protein belongs to the universal ribosomal protein uS4 family. As to quaternary structure, part of the 30S ribosomal subunit. Contacts protein S5. The interaction surface between S4 and S5 is involved in control of translational fidelity.

Its subcellular location is the plastid. The protein localises to the chloroplast. One of the primary rRNA binding proteins, it binds directly to 16S rRNA where it nucleates assembly of the body of the 30S subunit. Functionally, with S5 and S12 plays an important role in translational accuracy. The protein is Small ribosomal subunit protein uS4c (rps4) of Agrostis stolonifera (Creeping bentgrass).